The sequence spans 241 residues: 1-(5-phosphoribosyl)-5-[(5-phosphoribosylamino)methylideneamino] imidazole-4-carboxamide isomerase (241 aa).

Asp8 (proton acceptor) is an active-site residue. Asp130 functions as the Proton donor in the catalytic mechanism.

Belongs to the HisA/HisF family.

Its subcellular location is the cytoplasm. It carries out the reaction 1-(5-phospho-beta-D-ribosyl)-5-[(5-phospho-beta-D-ribosylamino)methylideneamino]imidazole-4-carboxamide = 5-[(5-phospho-1-deoxy-D-ribulos-1-ylimino)methylamino]-1-(5-phospho-beta-D-ribosyl)imidazole-4-carboxamide. It participates in amino-acid biosynthesis; L-histidine biosynthesis; L-histidine from 5-phospho-alpha-D-ribose 1-diphosphate: step 4/9. The chain is 1-(5-phosphoribosyl)-5-[(5-phosphoribosylamino)methylideneamino] imidazole-4-carboxamide isomerase from Leptospira borgpetersenii serovar Hardjo-bovis (strain JB197).